A 498-amino-acid chain; its full sequence is Isocitrate dehydrogenase [NADP], mitochondrial (498 aa).

NADP(+) contacts are provided by residues 164-166 and Arg-171; that span reads TIT. A substrate-binding site is contributed by Thr-166. Substrate is bound by residues 183–189, Arg-198, and Arg-221; that span reads SPNGTIR. Asp-339 provides a ligand contact to Mn(2+). Lys-347 provides a ligand contact to NADP(+). Position 362 (Asp-362) interacts with Mn(2+). Residues 397–402 and Asn-415 contribute to the NADP(+) site; that span reads GTVTRH.

The protein belongs to the isocitrate and isopropylmalate dehydrogenases family. It depends on Mg(2+) as a cofactor. Mn(2+) is required as a cofactor.

It is found in the mitochondrion. The catalysed reaction is D-threo-isocitrate + NADP(+) = 2-oxoglutarate + CO2 + NADPH. The polypeptide is Isocitrate dehydrogenase [NADP], mitochondrial (icdA) (Aspergillus niger).